A 129-amino-acid polypeptide reads, in one-letter code: HTH-type transcriptional regulator HmrR (129 aa).

The region spanning 1–68 (MNIGEASERS…VEECRQLLAL (68 aa)) is the HTH merR-type domain. Residues 4-23 (GEASERSGLPSKTIRYYEDI) constitute a DNA-binding region (H-T-H motif).

In terms of assembly, homodimer.

It localises to the cytoplasm. Its function is as follows. Regulates the transcription of actP. It detects cytoplasmic copper stress and activates transcription in response to increasing copper concentrations. In the absence of copper, it negatively regulates the transcription of actP. This chain is HTH-type transcriptional regulator HmrR (hmrR), found in Rhizobium leguminosarum bv. viciae.